We begin with the raw amino-acid sequence, 143 residues long: Small ribosomal subunit protein uS9 (143 aa).

A disordered region spans residues 123 to 143; it reads RPEPKKFGGRGARSRFQKSYR. The span at 134-143 shows a compositional bias: basic residues; sequence ARSRFQKSYR.

Belongs to the universal ribosomal protein uS9 family.

The polypeptide is Small ribosomal subunit protein uS9 (RPS16) (Kluyveromyces lactis (strain ATCC 8585 / CBS 2359 / DSM 70799 / NBRC 1267 / NRRL Y-1140 / WM37) (Yeast)).